A 152-amino-acid chain; its full sequence is Protein Smg homolog (152 aa).

This sequence belongs to the Smg family.

This is Protein Smg homolog from Nitrosomonas europaea (strain ATCC 19718 / CIP 103999 / KCTC 2705 / NBRC 14298).